A 341-amino-acid chain; its full sequence is MMMIIDCHGHYTVLPKAHDEWREQQKAAFKAGQPAPPYPEISDDEIRETIEANQLRLIKERGADMTIFSPRASAMAPHVGDQSVAVPWAQACNNLIARVVDLFPETFAGVCMLPQSPEADMTSSIAELERCVNELGFIGCNLNPDPGGGHFKHPPLTDRFWYPFYEKMVELDVPAMIHVSGSCNPAMHATGAYYLAADTIAFMQLLQGNLFADFPTLRFIIPHGGGAVPYHWGRFRGLADMLKQPSLDTLLMNNVFFDTCVYHQPGINLLADVIDNKNILFGSEMVGAVRGIDPTTGHYFDDTKRYIDALDISDQERHAIFEGNTRRVFPRLDAKLKARGL.

Residues histidine 8 and histidine 10 each coordinate Zn(2+). Residue 71–73 (RAS) coordinates substrate. Residue histidine 178 coordinates Zn(2+). Substrate is bound by residues tyrosine 194 and histidine 223. Catalysis depends on glutamate 284, which acts as the Proton donor/acceptor. Arginine 290 contacts substrate.

Belongs to the metallo-dependent hydrolases superfamily. Homodimer. Zn(2+) serves as cofactor.

It carries out the reaction (3Z)-2-oxo-4-carboxy-3-hexenedioate + H2O = (2S)-2-hydroxy-4-oxobutane-1,2,4-tricarboxylate. It participates in secondary metabolite metabolism; lignin degradation. In terms of biological role, contributes to the degradation of lignin at the level of the protocatechuate 4,5-cleavage pathway. Catalyzes the hydration of the double bond of (3Z)-2-keto-4-carboxy-3-hexenedioate (KCH) to (4S)-4-carboxy-4-hydroxy-2-oxoadipate (CHA, also named (2S)-2-hydroxy-4-oxobutane-1,2,4-tricarboxylate). Is involved in the catabolism of both vanillate and syringate. The sequence is that of 2-keto-4-carboxy-3-hexenedioate hydratase from Sphingobium sp. (strain NBRC 103272 / SYK-6).